Reading from the N-terminus, the 63-residue chain is Venom peptide 2a (63 aa).

A signal peptide spans 1–22 (MRGTSFILFAVVVILGFLNANA). 5 AXPX repeats span residues 22–25 (AEPL), 26–29 (ANPA), 32–35 (ANPD), 38–41 (ANPD), and 44–47 (ANPE). Positions 23–48 (EPLANPAPLANPDPLANPDPLANPEA) are excised as a propeptide. Residue Leu-62 is modified to Leucine amide.

Expressed by the venom gland.

It is found in the secreted. The protein localises to the target cell membrane. Its function is as follows. Antimicrobial peptide. Shows activities against Gram-positive bacteria (S.aureus MIC=50 uM and 200 ug/ml, and B.subtilis MIC=200 ug/ml), Gram-negative bacterium E.coli (MIC=100 uM and 200 ug/ml) and fungi (B.cinerea MIC=5 uM, S.cerevisiae MIC=128 ug/ml, S.pombe MIC=128 ug/ml, A.nidulans MIC=128 ug/ml, and C.albicans MIC=64-100 uM). Shows cytolytic activity against insect cell lines. Its hemolytic activity is controversial, as Baek and colleagues report no activity while Bea and colleagues note a hemolytic activity. In vivo, peptide injection in the vicinity of the head and thorax of lepidopteran larvae induces feeding disorder followed by death due to starvation. Is weakly lethal when tested on water flies (D.magna), but is not lethal on lady beetles (H.convergens). The chain is Venom peptide 2a from Eumenes pomiformis (Potter wasp).